We begin with the raw amino-acid sequence, 214 residues long: Probable transaldolase (214 aa).

Lys83 serves as the catalytic Schiff-base intermediate with substrate.

The protein belongs to the transaldolase family. Type 3B subfamily.

The protein resides in the cytoplasm. It catalyses the reaction D-sedoheptulose 7-phosphate + D-glyceraldehyde 3-phosphate = D-erythrose 4-phosphate + beta-D-fructose 6-phosphate. Its pathway is carbohydrate degradation; pentose phosphate pathway; D-glyceraldehyde 3-phosphate and beta-D-fructose 6-phosphate from D-ribose 5-phosphate and D-xylulose 5-phosphate (non-oxidative stage): step 2/3. Functionally, transaldolase is important for the balance of metabolites in the pentose-phosphate pathway. In Desulfotalea psychrophila (strain LSv54 / DSM 12343), this protein is Probable transaldolase.